The sequence spans 670 residues: Solute carrier organic anion transporter family member 1A4 (670 aa).

Topologically, residues 1 to 20 (MGKSEKEVATHGVRCFSKIK) are cytoplasmic. Residues 21–40 (AFLLALTCAYVSKSLSGTYM) traverse the membrane as a helical segment. Topologically, residues 41-59 (NSMLTQIERQFGIPTSVVG) are extracellular. Residues 60–80 (LINGSFEIGNLLLIIFVSYFG) traverse the membrane as a helical segment. Over 81–86 (TKLHRP) the chain is Cytoplasmic. The chain crosses the membrane as a helical span at residues 87–111 (IMIGVGCAVMGLGCFLISIPHFLMG). Residues 112 to 155 (RYEYETTILPTSNLSSNSFVCTENRTQTLKPTQDPTECVKEMKS) lie on the Extracellular side of the membrane. N-linked (GlcNAc...) asparagine glycosylation is found at asparagine 124 and asparagine 135. Residues 156–184 (LMWIYVLVGNIIRGMGETPIMPLGISYIE) traverse the membrane as a helical segment. Topologically, residues 185–203 (DFAKSENSPLYIGILETGM) are cytoplasmic. The helical transmembrane segment at 204 to 224 (TIGPLIGLLLGSSCANIYVDT) threads the bilayer. Topologically, residues 225–242 (GSVNTDDLTITPTDTRWV) are extracellular. A helical membrane pass occupies residues 243–267 (GAWWIGFLVCAGVNILTSIPFFFFP). Over 268–311 (KTLLKEGLQDNGDGTENAKEEKHREKIKEENRGITKDFFLFMKS) the chain is Cytoplasmic. The chain crosses the membrane as a helical span at residues 312 to 333 (LSCNPIYMIFILISVIQVNAFI). The Extracellular segment spans residues 334–353 (NSFTFMPKYLEQQYGKSTAE). The chain crosses the membrane as a helical span at residues 354–377 (IVFLMGLYMLPPICLGYLIGGLIM). Over 378-381 (KKFK) the chain is Cytoplasmic. The chain crosses the membrane as a helical span at residues 382 to 405 (ITVKKAAYIGFWLSLTEYLLSFVS). The Extracellular portion of the chain corresponds to 406–513 (YIMTCDNFPV…PECANKLQYF (108 aa)). The region spanning 433 to 488 (NNVLADCNTKCSCLTNTWDPVCGDNGLSYMSACLAGCEKSVGTGTNMVFQNCSCIQ) is the Kazal-like domain. 3 disulfides stabilise this stretch: cysteine 439–cysteine 469, cysteine 445–cysteine 465, and cysteine 454–cysteine 486. N-linked (GlcNAc...) asparagine glycosylation is found at asparagine 483 and asparagine 492. Residues 514–536 (LIISIIGCFIFSLGAIPGYMVLL) traverse the membrane as a helical segment. The Cytoplasmic portion of the chain corresponds to 537-545 (RCMKSEEKS). The helical transmembrane segment at 546–571 (LGVGLHTFCMRILGGIPAPIYFGALI) threads the bilayer. Topologically, residues 572–605 (DRTCLHWGTLKCGEPGACRMYDINSFRRIYLGLP) are extracellular. Residues 606 to 623 (AALRGASFLPALFILILM) traverse the membrane as a helical segment. Over 624–670 (RKFQFPGDIDSSDTDPAEMKLTAKESKCTNVHRSPTMQNDGERKTKL) the chain is Cytoplasmic. Phosphoserine is present on residues serine 634 and serine 635. Residues 649–670 (SKCTNVHRSPTMQNDGERKTKL) are disordered. The span at 651–662 (CTNVHRSPTMQN) shows a compositional bias: polar residues.

It belongs to the organo anion transporter (TC 2.A.60) family. As to expression, highly expressed in brain and liver. Detected at very low levels in heart and lung.

The protein resides in the cell membrane. It catalyses the reaction estrone 3-sulfate(out) = estrone 3-sulfate(in). It carries out the reaction taurocholate(out) = taurocholate(in). The catalysed reaction is prostaglandin E2(out) = prostaglandin E2(in). The enzyme catalyses L-thyroxine(out) = L-thyroxine(in). Mediates the Na(+)-independent transport of organic anions such as taurocholate, cholate, 17-beta-glucuronosyl estradiol, prostaglandin E2, estrone 3-sulfate, L-thyroxine (T4), the cardiac glycosides ouabain and digoxin and thyroid hormones. Shows a pH-sensitive substrate specificity which may be ascribed to the protonation state of the binding site and leads to a stimulation of substrate transport in an acidic microenvironment. Hydrogencarbonate/HCO3(-) acts as the probable counteranion that exchanges for organic anions. In Mus musculus (Mouse), this protein is Solute carrier organic anion transporter family member 1A4 (Slco1a4).